The sequence spans 356 residues: 3-dehydroquinate synthase (356 aa).

NAD(+) is bound by residues 69 to 74, 103 to 107, 127 to 128, Lys-140, Lys-149, and 167 to 170; these read DGEKFK, GVIGD, TT, and CLKT. 3 residues coordinate Zn(2+): Glu-182, His-245, and His-262.

It belongs to the sugar phosphate cyclases superfamily. Dehydroquinate synthase family. Co(2+) serves as cofactor. Zn(2+) is required as a cofactor. It depends on NAD(+) as a cofactor.

The protein localises to the cytoplasm. It carries out the reaction 7-phospho-2-dehydro-3-deoxy-D-arabino-heptonate = 3-dehydroquinate + phosphate. Its pathway is metabolic intermediate biosynthesis; chorismate biosynthesis; chorismate from D-erythrose 4-phosphate and phosphoenolpyruvate: step 2/7. Functionally, catalyzes the conversion of 3-deoxy-D-arabino-heptulosonate 7-phosphate (DAHP) to dehydroquinate (DHQ). The polypeptide is 3-dehydroquinate synthase (Psychromonas ingrahamii (strain DSM 17664 / CCUG 51855 / 37)).